The following is a 486-amino-acid chain: Elastin-binding protein EbpS (486 aa).

Residues 1–40 (MSNNFKDDFEKNRQSIDTNSHQDHTEDVEKDQSELEHQDT) are compositionally biased toward basic and acidic residues. The disordered stretch occupies residues 1–314 (MSNNFKDDFE…NHDRDKERKK (314 aa)). At 2-204 (SNNFKDDFEK…EPKEHHNGKK (203 aa)) the chain is on the extracellular side. Residues 14–34 (QSIDTNSHQDHTEDVEKDQSE) are elastin-binding. Positions 64 to 85 (TNHNKQVHNESQTSEDNVQNEA) are enriched in polar residues. Composition is skewed to basic and acidic residues over residues 103–118 (EPSH…EEYY) and 126–143 (DKSH…DTIK). Positions 161 to 179 (EQSQQPKPYFTTGANQSET) are enriched in polar residues. Over residues 180–199 (SKNEHDNDSVKQDQDEPKEH) the composition is skewed to basic and acidic residues. Residues 204–225 (KAAAIGAGTAGVAGAAGAMAAS) are compositionally biased toward low complexity. A helical membrane pass occupies residues 205–225 (AAAIGAGTAGVAGAAGAMAAS). Topologically, residues 226 to 319 (KAKKHSNDAQ…KERKKGGMAK (94 aa)) are cytoplasmic. Positions 233–246 (DAQNKSNSGKANNS) are enriched in polar residues. Residues 247–259 (TEDKASQDKSKDH) show a composition bias toward basic and acidic residues. Low complexity predominate over residues 278–297 (GAASKSASAASKPHASNNAS). The span at 299-314 (NHDEHDNHDRDKERKK) shows a compositional bias: basic and acidic residues. The chain crosses the membrane as a helical span at residues 320 to 340 (VLLPLIAAVLIIGALAIFGGM). Topologically, residues 341 to 486 (ALNNHNNGTK…IRNGQQIVIP (146 aa)) are extracellular. Residues 351 to 440 (ENKIANTNKN…QRQGGGQRHT (90 aa)) form a disordered region. A compositionally biased stretch (basic and acidic residues) spans 361 to 398 (NADESKDKDTSKDASKDKSKSTDSDKSKEDQDKATKDE). Positions 403-431 (QNNANQANNQAQNNQNQQQANQNQQQQQQ) are enriched in low complexity. The 49-residue stretch at 437 to 485 (QRHTVNGQENLYRIAIQYYGSGSPENVEKIRRANGLSGNNIRNGQQIVI) folds into the LysM domain.

It localises to the cell membrane. Functionally, promotes binding of soluble elastin peptides and tropoelastin to S.aureus cells although it is not able to promote bacterial adherence to immobilized elastin and, therefore, is not a microbial surface component recognizing adhesive matrix molecule (MSCRAMM). The polypeptide is Elastin-binding protein EbpS (ebpS) (Staphylococcus aureus (strain USA300)).